The chain runs to 125 residues: Small ribosomal subunit protein uS12 (125 aa).

Residue Asp89 is modified to 3-methylthioaspartic acid. Residues 104-125 (LQGVKDRKQSRSKYGSKRPKKA) are disordered. Basic residues predominate over residues 113-125 (SRSKYGSKRPKKA).

The protein belongs to the universal ribosomal protein uS12 family. As to quaternary structure, part of the 30S ribosomal subunit. Contacts proteins S8 and S17. May interact with IF1 in the 30S initiation complex.

Its function is as follows. With S4 and S5 plays an important role in translational accuracy. Interacts with and stabilizes bases of the 16S rRNA that are involved in tRNA selection in the A site and with the mRNA backbone. Located at the interface of the 30S and 50S subunits, it traverses the body of the 30S subunit contacting proteins on the other side and probably holding the rRNA structure together. The combined cluster of proteins S8, S12 and S17 appears to hold together the shoulder and platform of the 30S subunit. This chain is Small ribosomal subunit protein uS12, found in Leptothrix cholodnii (strain ATCC 51168 / LMG 8142 / SP-6) (Leptothrix discophora (strain SP-6)).